Consider the following 802-residue polypeptide: Bifunctional purine biosynthetic protein ADE5,7 (802 aa).

The segment at M1–L444 is GARS. An ATP-grasp domain is found at K126–E339. K157 to S218 serves as a coordination point for ATP. Residues E307 and N309 each contribute to the Mg(2+) site. Positions L455–E788 are AIRS.

In the N-terminal section; belongs to the GARS family. It in the C-terminal section; belongs to the AIR synthase family. In terms of assembly, homodimer. It depends on Mg(2+) as a cofactor. The cofactor is Mn(2+).

The protein resides in the cytoplasm. Its subcellular location is the cytosol. It catalyses the reaction 2-formamido-N(1)-(5-O-phospho-beta-D-ribosyl)acetamidine + ATP = 5-amino-1-(5-phospho-beta-D-ribosyl)imidazole + ADP + phosphate + H(+). The enzyme catalyses 5-phospho-beta-D-ribosylamine + glycine + ATP = N(1)-(5-phospho-beta-D-ribosyl)glycinamide + ADP + phosphate + H(+). The protein operates within purine metabolism; IMP biosynthesis via de novo pathway; 5-amino-1-(5-phospho-D-ribosyl)imidazole from N(2)-formyl-N(1)-(5-phospho-D-ribosyl)glycinamide: step 2/2. It participates in purine metabolism; IMP biosynthesis via de novo pathway; N(1)-(5-phospho-D-ribosyl)glycinamide from 5-phospho-alpha-D-ribose 1-diphosphate: step 2/2. Catalyzes the second and fifth step in the 'de novo' purine biosynthesis pathway; contains phosphoribosylamine--glycine ligase (GARS) and phosphoribosylformylglycinamidine cyclo-ligase (AIRS) activities. The protein is Bifunctional purine biosynthetic protein ADE5,7 of Cryptococcus neoformans var. grubii serotype A (strain H99 / ATCC 208821 / CBS 10515 / FGSC 9487) (Filobasidiella neoformans var. grubii).